Consider the following 107-residue polypeptide: MSESGSKSSQPLASKQEKDGTEKRGRGRPRKQPPVSPGTALVGSQKEPSEVPTPKRPRGRPKGSKNKGAAKTRKVTTAPGRKPRGRPKKLEKEEEEGISQESSEEEQ.

Positions 1–13 (MSESGSKSSQPLA) are enriched in polar residues. The segment at 1–107 (MSESGSKSSQ…ISQESSEEEQ (107 aa)) is disordered. Position 2 is an N-acetylserine (Ser-2). The residue at position 7 (Lys-7) is an N6-acetyllysine. An ADP-ribosylserine modification is found at Ser-8. Position 9 is an ADP-ribosylserine; alternate (Ser-9). The residue at position 9 (Ser-9) is a Phosphoserine; alternate. Position 15 is an N6-acetyllysine; alternate (Lys-15). A Glycyl lysine isopeptide (Lys-Gly) (interchain with G-Cter in SUMO2); alternate cross-link involves residue Lys-15. Over residues 15 to 24 (KQEKDGTEKR) the composition is skewed to basic and acidic residues. Positions 21–31 (TEKRGRGRPRK) form a DNA-binding region, a.T hook 1. The residue at position 26 (Arg-26) is an Asymmetric dimethylarginine; alternate. Arg-26 carries the omega-N-methylarginine; alternate modification. Arg-26 carries the post-translational modification Symmetric dimethylarginine; alternate. Ser-36 carries the post-translational modification Phosphoserine; by HIPK2 and CDC2. The residue at position 39 (Thr-39) is a Phosphothreonine. Phosphoserine occurs at positions 44 and 49. Thr-53 carries the phosphothreonine; by HIPK2 and CDC2 modification. 2 consecutive DNA-binding regions (a.T hook) follow at residues 53 to 63 (TPKRPRGRPKG) and 78 to 89 (APGRKPRGRPKK). An interaction with HIPK2 region spans residues 53–77 (TPKRPRGRPKGSKNKGAAKTRKVTT). The span at 55–74 (KRPRGRPKGSKNKGAAKTRK) shows a compositional bias: basic residues. Arg-58 and Arg-60 each carry asymmetric dimethylarginine; by PRMT6; alternate. An omega-N-methylarginine; by PRMT6; alternate mark is found at Arg-58 and Arg-60. Positions 93 to 107 (EEEEGISQESSEEEQ) are enriched in acidic residues. 3 positions are modified to phosphoserine: Ser-99, Ser-102, and Ser-103.

This sequence belongs to the HMGA family. In terms of assembly, interacts with HIPK2. Isoforms HMG-I and HMG-Y can be phosphorylated by HIPK2. Phosphorylation may modulate DNA-binding affinity. In terms of processing, methylation at Arg-58 is mutually exclusive with methylation at Arg-60.

The protein resides in the nucleus. It is found in the chromosome. Functionally, HMG-I/Y bind preferentially to the minor groove of A+T rich regions in double-stranded DNA. It is suggested that these proteins could function in nucleosome phasing and in the 3'-end processing of mRNA transcripts. They are also involved in the transcription regulation of genes containing, or in close proximity to A+T-rich regions. The sequence is that of High mobility group protein HMG-I/HMG-Y (Hmga1) from Mus musculus (Mouse).